Here is a 693-residue protein sequence, read N- to C-terminus: Translation factor GUF1 homolog, chloroplastic (693 aa).

The transit peptide at Met1–Leu51 directs the protein to the chloroplast. Residues Ser86–Arg267 enclose the tr-type G domain. GTP contacts are provided by residues Ala95–Ser102, Asp160–His164, and Asn214–Asp217.

It belongs to the TRAFAC class translation factor GTPase superfamily. Classic translation factor GTPase family. LepA subfamily.

The protein resides in the plastid. The protein localises to the chloroplast. It carries out the reaction GTP + H2O = GDP + phosphate + H(+). Functionally, promotes chloroplast protein synthesis. May act as a fidelity factor of the translation reaction, by catalyzing a one-codon backward translocation of tRNAs on improperly translocated ribosomes. The polypeptide is Translation factor GUF1 homolog, chloroplastic (Ricinus communis (Castor bean)).